We begin with the raw amino-acid sequence, 257 residues long: 5-keto-4-deoxy-D-glucarate aldolase (257 aa).

Catalysis depends on H51, which acts as the Proton acceptor. Q152 is a binding site for substrate. E154 contributes to the Mg(2+) binding site. Residues S179 and D180 each contribute to the substrate site. D180 contacts Mg(2+).

This sequence belongs to the HpcH/HpaI aldolase family. KDGluc aldolase subfamily. In terms of assembly, homohexamer; trimer of dimers. Mg(2+) serves as cofactor.

The enzyme catalyses 5-dehydro-4-deoxy-D-glucarate = 2-hydroxy-3-oxopropanoate + pyruvate. It carries out the reaction 2-dehydro-3-deoxy-D-glucarate = 2-hydroxy-3-oxopropanoate + pyruvate. It functions in the pathway carbohydrate acid metabolism; galactarate degradation; D-glycerate from galactarate: step 2/3. Functionally, catalyzes the reversible retro-aldol cleavage of both 5-keto-4-deoxy-D-glucarate and 2-keto-3-deoxy-D-glucarate to pyruvate and tartronic semialdehyde. This chain is 5-keto-4-deoxy-D-glucarate aldolase, found in Shigella boydii serotype 18 (strain CDC 3083-94 / BS512).